The sequence spans 102 residues: Urease subunit beta (102 aa).

The protein belongs to the urease beta subunit family. Heterotrimer of UreA (gamma), UreB (beta) and UreC (alpha) subunits. Three heterotrimers associate to form the active enzyme.

Its subcellular location is the cytoplasm. It carries out the reaction urea + 2 H2O + H(+) = hydrogencarbonate + 2 NH4(+). Its pathway is nitrogen metabolism; urea degradation; CO(2) and NH(3) from urea (urease route): step 1/1. In Alteromonas mediterranea (strain DSM 17117 / CIP 110805 / LMG 28347 / Deep ecotype), this protein is Urease subunit beta.